A 70-amino-acid polypeptide reads, in one-letter code: Small ribosomal subunit protein bS21 (70 aa).

It belongs to the bacterial ribosomal protein bS21 family.

The chain is Small ribosomal subunit protein bS21 from Polaromonas naphthalenivorans (strain CJ2).